Consider the following 420-residue polypeptide: Subtilisin-like protease 7 (420 aa).

Positions 1–20 (MGFITKAIPLALAAASVING) are cleaved as a signal peptide. A propeptide spanning residues 21–119 (AEIMETRAGV…IERDARVQIN (99 aa)) is cleaved from the precursor. An Inhibitor I9 domain is found at 36–118 (KYIVVMNDGM…YIERDARVQI (83 aa)). One can recognise a Peptidase S8 domain in the interval 129 to 413 (SWGLARVGSK…SFPLNIYEEQ (285 aa)). Active-site charge relay system residues include D161 and H192. N-linked (GlcNAc...) asparagine glycosylation is found at N222 and N252. The Charge relay system role is filled by S346. N396 carries N-linked (GlcNAc...) asparagine glycosylation.

It belongs to the peptidase S8 family.

The protein localises to the secreted. Secreted subtilisin-like serine protease with keratinolytic activity that contributes to pathogenicity. The sequence is that of Subtilisin-like protease 7 (SUB7) from Arthroderma benhamiae (strain ATCC MYA-4681 / CBS 112371) (Trichophyton mentagrophytes).